The primary structure comprises 516 residues: Probable serine/threonine-protein kinase WNK3 (516 aa).

Positions 22–280 constitute a Protein kinase domain; that stretch reads GRYKEVLGKG…AKELLDDPFL (259 aa). Residues 102 to 105 and Lys-152 contribute to the ATP site; that span reads TEVF. Residue Asp-169 is the Proton acceptor of the active site. A disordered region spans residues 426–451; the sequence is SSPKAGAGDSRSPFAPRSNSKLSSAQ. The span at 442–451 shows a compositional bias: polar residues; sequence RSNSKLSSAQ. Positions 457–490 form a coiled coil; the sequence is EVGVIVEKLESLLRKQREEIEEMQRDQERIVTEF.

This sequence belongs to the protein kinase superfamily. Ser/Thr protein kinase family. WNK subfamily.

The enzyme catalyses L-seryl-[protein] + ATP = O-phospho-L-seryl-[protein] + ADP + H(+). It carries out the reaction L-threonyl-[protein] + ATP = O-phospho-L-threonyl-[protein] + ADP + H(+). In terms of biological role, may regulate flowering time by modulating the photoperiod pathway. The protein is Probable serine/threonine-protein kinase WNK3 (WNK3) of Arabidopsis thaliana (Mouse-ear cress).